The sequence spans 311 residues: Probable manganese-dependent inorganic pyrophosphatase (311 aa).

Positions 9, 13, 15, 77, 99, and 151 each coordinate Mn(2+).

The protein belongs to the PPase class C family. Mn(2+) is required as a cofactor.

The protein localises to the cytoplasm. The enzyme catalyses diphosphate + H2O = 2 phosphate + H(+). The sequence is that of Probable manganese-dependent inorganic pyrophosphatase from Streptococcus equi subsp. zooepidemicus (strain H70).